Consider the following 189-residue polypeptide: Protein GrpE (189 aa).

Residues 1 to 14 (MTEKNEEVVEDKNI) show a composition bias toward basic and acidic residues. The interval 1–38 (MTEKNEEVVEDKNISDQTDENLTEEIESEADDLQVEPD) is disordered. Over residues 17 to 35 (QTDENLTEEIESEADDLQV) the composition is skewed to acidic residues.

The protein belongs to the GrpE family. In terms of assembly, homodimer.

The protein localises to the cytoplasm. In terms of biological role, participates actively in the response to hyperosmotic and heat shock by preventing the aggregation of stress-denatured proteins, in association with DnaK and GrpE. It is the nucleotide exchange factor for DnaK and may function as a thermosensor. Unfolded proteins bind initially to DnaJ; upon interaction with the DnaJ-bound protein, DnaK hydrolyzes its bound ATP, resulting in the formation of a stable complex. GrpE releases ADP from DnaK; ATP binding to DnaK triggers the release of the substrate protein, thus completing the reaction cycle. Several rounds of ATP-dependent interactions between DnaJ, DnaK and GrpE are required for fully efficient folding. This is Protein GrpE from Leuconostoc mesenteroides subsp. mesenteroides (strain ATCC 8293 / DSM 20343 / BCRC 11652 / CCM 1803 / JCM 6124 / NCDO 523 / NBRC 100496 / NCIMB 8023 / NCTC 12954 / NRRL B-1118 / 37Y).